Here is a 358-residue protein sequence, read N- to C-terminus: MNSIHLPSHQRTSAPGLHQHRPKGAQEASEMAVYCDNFSMYHQQNLHSSQRAPNYGIGDYAPPTNPYLWLGGPGVSNSPSNSSSFCGTDLSWLSVASQEELLKVVRPPYSYSALIAMAIQNAPEKKLTLSQIYQYVADNFPFYKRSKAGWQNSIRHNLSLNDCFKKVPRDEDDPGKGNYWTLDPNCEKMFDNGNFRRKRKRRSDSSSAEAVTVKGEEGRPALGGKGGESPLMLTPSSPELEAASDGRKSTSPSGITSSPCLNNFFSSMTSLDTTSVNRQMSMGLVNELSQRNITGLGSFTSGSVAEPSVDLQDNSLHLNRPSYYSTLSSTHQNNQFNSHFYNTFSVNSLIYAREGSEV.

The segment covering 1–13 has biased composition (polar residues); sequence MNSIHLPSHQRTS. Disordered regions lie at residues 1–25 and 191–255; these read MNSI…PKGA and DNGN…PSGI. Positions 106-200 form a DNA-binding region, fork-head; it reads RPPYSYSALI…DNGNFRRKRK (95 aa).

The protein resides in the nucleus. In terms of biological role, probable transcription factor. The protein is Forkhead box protein I1c of Xenopus tropicalis (Western clawed frog).